The sequence spans 1042 residues: Glutamate dehydrogenase 2 (1042 aa).

Residue Lys-596 is part of the active site. The residue at position 763 (Arg-763) is an ADP-ribosylarginine; by Legionella Lart1.

This sequence belongs to the Glu/Leu/Phe/Val dehydrogenases family. In terms of assembly, homodimer. In terms of processing, (Microbial infection) ADP-ribosylated at Arg-763 by the Legionella pneumophila effector Lart1, which inhibits the glutamate dehydrogenase activity. Amoeba are natural hosts of Legionella, and ADP-ribosylation by Lart1 may promote Legionella parasitism.

It is found in the cytoplasm. It carries out the reaction L-glutamate + NAD(+) + H2O = 2-oxoglutarate + NH4(+) + NADH + H(+). With respect to regulation, activity is stimulated by AMP. (Microbial infection) Inhibited by ADP-ribosylation. This is Glutamate dehydrogenase 2 (glud2) from Dictyostelium discoideum (Social amoeba).